The primary structure comprises 222 residues: Uclacyanin-3 (222 aa).

The N-terminal stretch at 1 to 21 (MGSTVAAALLLFLAAVPAVFA) is a signal peptide. One can recognise a Phytocyanin domain in the interval 22 to 120 (ATFKVGDISG…GMKLAVPVLA (99 aa)). The Cu cation site is built by His61, Cys102, His107, and Met112. Cys74 and Cys108 are disulfide-bonded. Residues 121-198 (AAPSPSTPSS…APLPPSLSPN (78 aa)) form a disordered region. Composition is skewed to pro residues over residues 125 to 172 (PSTP…PSAS) and 185 to 195 (TPPPAPLPPSL). A lipid anchor (GPI-anchor amidated asparagine) is attached at Asn198. A propeptide spans 199 to 222 (AASKGVMSYGIIGVTMILMYAVMT) (removed in mature form).

It localises to the cell membrane. In terms of biological role, probably acts as an electron carrier involved in oxygen activation and/or lignin formation. The sequence is that of Uclacyanin-3 (UCC3) from Arabidopsis thaliana (Mouse-ear cress).